Reading from the N-terminus, the 201-residue chain is MNTLECLAVAVALAMDAFAVAIATGIRLREVSPRQTFRLAFHFGLFQALMPVAGWTLGLTVRGYIEQWDHWLAFGLLLYIGVRMMREAFEETEENDDRCDPTRGLTLIMLAVATSIDALAVGLSLSVLGIDIVTPAIVIGVVCLLFTATGLHLGRMLSRAESLGRRAALAGGVVLIGIGLRILYEHGVFDTAATLARSVLG.

Transmembrane regions (helical) follow at residues 6 to 26 (CLAV…ATGI), 39 to 59 (LAFH…TLGL), 105 to 125 (LTLI…GLSL), 127 to 147 (VLGI…LLFT), and 169 to 189 (LAGG…HGVF).

This sequence belongs to the MntP (TC 9.B.29) family.

Its subcellular location is the cell inner membrane. Probably functions as a manganese efflux pump. The protein is Putative manganese efflux pump MntP of Nitratidesulfovibrio vulgaris (strain ATCC 29579 / DSM 644 / CCUG 34227 / NCIMB 8303 / VKM B-1760 / Hildenborough) (Desulfovibrio vulgaris).